The primary structure comprises 458 residues: tRNA modification GTPase MnmE (458 aa).

R32, E89, and K128 together coordinate (6S)-5-formyl-5,6,7,8-tetrahydrofolate. In terms of domain architecture, TrmE-type G spans 224-381 (GVRVVLAGRP…LCQRLKECAG (158 aa)). Position 234 (N234) interacts with K(+). Residues 234 to 239 (NVGKSS), 253 to 259 (TDVPGTT), and 278 to 281 (DTAG) each bind GTP. A Mg(2+)-binding site is contributed by S238. K(+)-binding residues include T253, V255, and T258. Mg(2+) is bound at residue T259. K458 contributes to the (6S)-5-formyl-5,6,7,8-tetrahydrofolate binding site.

It belongs to the TRAFAC class TrmE-Era-EngA-EngB-Septin-like GTPase superfamily. TrmE GTPase family. Homodimer. Heterotetramer of two MnmE and two MnmG subunits. Requires K(+) as cofactor.

It is found in the cytoplasm. Exhibits a very high intrinsic GTPase hydrolysis rate. Involved in the addition of a carboxymethylaminomethyl (cmnm) group at the wobble position (U34) of certain tRNAs, forming tRNA-cmnm(5)s(2)U34. This chain is tRNA modification GTPase MnmE, found in Nitrosococcus oceani (strain ATCC 19707 / BCRC 17464 / JCM 30415 / NCIMB 11848 / C-107).